Here is a 115-residue protein sequence, read N- to C-terminus: Protein E6A (115 aa).

Residues 1–25 (MTDKFYFYGLFWGILLFVFLQHMQG) form the signal peptide.

The sequence is that of Protein E6A (12) from Equine herpesvirus 2 (strain 86/87) (EHV-2).